The chain runs to 424 residues: 3-isopropylmalate dehydratase large subunit 1 (424 aa).

Cys303, Cys363, and Cys366 together coordinate [4Fe-4S] cluster.

Belongs to the aconitase/IPM isomerase family. LeuC type 2 subfamily. In terms of assembly, heterodimer of LeuC and LeuD. Requires [4Fe-4S] cluster as cofactor.

The catalysed reaction is (2R,3S)-3-isopropylmalate = (2S)-2-isopropylmalate. It functions in the pathway amino-acid biosynthesis; L-leucine biosynthesis; L-leucine from 3-methyl-2-oxobutanoate: step 2/4. Functionally, catalyzes the isomerization between 2-isopropylmalate and 3-isopropylmalate, via the formation of 2-isopropylmaleate. The polypeptide is 3-isopropylmalate dehydratase large subunit 1 (Pyrococcus furiosus (strain ATCC 43587 / DSM 3638 / JCM 8422 / Vc1)).